Reading from the N-terminus, the 283-residue chain is Elongation factor Ts (283 aa).

Residues 80–83 (TDFV) form an involved in Mg(2+) ion dislocation from EF-Tu region.

The protein belongs to the EF-Ts family.

The protein localises to the cytoplasm. Its function is as follows. Associates with the EF-Tu.GDP complex and induces the exchange of GDP to GTP. It remains bound to the aminoacyl-tRNA.EF-Tu.GTP complex up to the GTP hydrolysis stage on the ribosome. This chain is Elongation factor Ts, found in Pectobacterium carotovorum subsp. carotovorum (strain PC1).